A 261-amino-acid chain; its full sequence is Claudin-18 (261 aa).

The Cytoplasmic segment spans residues 1-6; it reads MSTTRC. Residues 7-27 traverse the membrane as a helical segment; sequence QVVGFLLSILGLAGCIVATEM. Residues 28 to 80 are Extracellular-facing; sequence DMWSTQDLYDNPVTAVFQYEGLWRSCVQQSSGFTECRPYLTILGLPAMLQAVR. Residues 81–101 form a helical membrane-spanning segment; the sequence is ALMIVGIVLSVIGLLVAIFAL. Topologically, residues 102-122 are cytoplasmic; sequence KCIRMGNMDDSAKAKMTLTSG. A helical transmembrane segment spans residues 123-143; the sequence is IMFIIAGLCAIAGVSVFANML. Topologically, residues 144-174 are extracellular; it reads VTNFWMSTASMFTSMGGMVQTVQTRYTFGAA. Residues 175-195 form a helical membrane-spanning segment; the sequence is LFVGWVAGGLTLIGGVLMCIA. A required for role in regulation of RANKL-induced osteoclast differentiation region spans residues 195–261; it reads ACRGLAPEET…QSPPSKYDYV (67 aa). Topologically, residues 196 to 261 are cytoplasmic; the sequence is CRGLAPEETN…QSPPSKYDYV (66 aa). Position 214 is a phosphoserine (Ser-214). A disordered region spans residues 228–261; it reads SSGFESNTRNKKIYDGGARTEDEGQSPPSKYDYV. The span at 239-249 shows a compositional bias: basic and acidic residues; the sequence is KIYDGGARTED.

This sequence belongs to the claudin family. Interacts with TJP2/ZO-2. Interacts with TJP1/ZO-1. Interacts with YAP1 (phosphorylated); the interaction sequesters YAP1 away from the nucleus and thereby restricts transcription of YAP1 target genes. Interacts with CLDN19.

Its subcellular location is the cell junction. The protein localises to the tight junction. The protein resides in the cell membrane. In terms of biological role, involved in alveolar fluid homeostasis via regulation of alveolar epithelial tight junction composition and therefore ion transport and solute permeability, potentially via downstream regulation of the actin cytoskeleton organization and beta-2-adrenergic signaling. Required for lung alveolarization and maintenance of the paracellular alveolar epithelial barrier. Acts to maintain epithelial progenitor cell proliferation and organ size, via regulation of YAP1 localization away from the nucleus and thereby restriction of YAP1 target gene transcription. Acts as a negative regulator of RANKL-induced osteoclast differentiation, potentially via relocation of TJP2/ZO-2 away from the nucleus, subsequently involved in bone resorption in response to calcium deficiency. Mediates the osteoprotective effects of estrogen, potentially via acting downstream of estrogen signaling independently of RANKL signaling pathways. The sequence is that of Claudin-18 (CLDN18) from Bos taurus (Bovine).